A 382-amino-acid chain; its full sequence is Bestrophin-6 (382 aa).

A run of 4 helical transmembrane segments spans residues 29–49 (WKLI…VLAI), 68–88 (FINF…TTIV), 231–251 (LAYP…CAFA), and 265–285 (VIHY…MGWL).

The protein belongs to the anion channel-forming bestrophin (TC 1.A.46) family. Calcium-sensitive chloride channel subfamily.

Its subcellular location is the membrane. In Caenorhabditis elegans, this protein is Bestrophin-6 (best-6).